The following is a 260-amino-acid chain: Homeobox protein Hox-D11b (260 aa).

The span at 1–14 (MFSSSFSYPSKTSP) shows a compositional bias: low complexity. 2 disordered regions span residues 1–21 (MFSS…PFLA) and 151–206 (ITPG…CTRR). The span at 167-179 (RSPDGESSEERAG) shows a compositional bias: basic and acidic residues. Positions 205 to 260 (RRKKRCPYSKQQIIELEREFLFNIYINKDRRMQLSHLLRLTDRCVNNPLNQDSFFT) form a DNA-binding region, homeobox; truncated.

This sequence belongs to the Abd-B homeobox family.

The protein resides in the nucleus. Functionally, sequence-specific transcription factor which is part of a developmental regulatory system that provides cells with specific positional identities on the anterior-posterior axis. The sequence is that of Homeobox protein Hox-D11b (hoxd11b) from Takifugu rubripes (Japanese pufferfish).